The sequence spans 284 residues: Nucleoid occlusion protein (284 aa).

A DNA-binding region (H-T-H motif) is located at residues 143–162; that stretch reads EALAQRVGKSQSAIANKMRL.

Belongs to the ParB family.

It localises to the cytoplasm. Its subcellular location is the nucleoid. Its function is as follows. Effects nucleoid occlusion by binding relatively nonspecifically to DNA and preventing the assembly of the division machinery in the vicinity of the nucleoid, especially under conditions that disturb the cell cycle. It helps to coordinate cell division and chromosome segregation by preventing the formation of the Z ring through the nucleoid, which would cause chromosome breakage. This Listeria innocua serovar 6a (strain ATCC BAA-680 / CLIP 11262) protein is Nucleoid occlusion protein.